Here is a 355-residue protein sequence, read N- to C-terminus: Serine acetyltransferase 4 (355 aa).

It belongs to the transferase hexapeptide repeat family. In terms of assembly, homomultimer. In terms of tissue distribution, localized in vascular tissues, particularly in phloem.

It localises to the cytoplasm. It carries out the reaction L-serine + acetyl-CoA = O-acetyl-L-serine + CoA. It participates in amino-acid biosynthesis; L-cysteine biosynthesis; L-cysteine from L-serine: step 1/2. Its activity is regulated as follows. Feedback inhibitions by L-Ser and acetyl-CoA. In Arabidopsis thaliana (Mouse-ear cress), this protein is Serine acetyltransferase 4.